An 89-amino-acid chain; its full sequence is Large ribosomal subunit protein bL31B (89 aa).

Positions 70–89 (RVQRFESRRRRRQQQSGEQG) are disordered.

This sequence belongs to the bacterial ribosomal protein bL31 family. Type B subfamily. In terms of assembly, part of the 50S ribosomal subunit.

The chain is Large ribosomal subunit protein bL31B from Rubrobacter xylanophilus (strain DSM 9941 / JCM 11954 / NBRC 16129 / PRD-1).